The following is a 293-amino-acid chain: MFLRRLGGWLPRPWGRKKSTKADLPAPEPRWVDSSPENSGSDWDSAPETMGDVGPLKTKDSGTRRPPGAAPESSRDLKVDQLGSKRMDSLKRDKTASTIQEPARLESGGAIPKLDWDPVDSGGVKNLGVSAQGRLGTIGPEALLEKPGRRQKLLRWLRGEPGAPSHYLQDPEEYLQISTNLTLHLLELLATALLALCSRPLRAILDALGLRGPVGLWLHGLLCFLAALHGLHAVLSLLTAHPLHFACLFGLLQALVLAVSLREPVEDEETADWESEGQEREAKEQREGPGRML.

Disordered regions lie at residues 1-114 (MFLR…IPKL) and 268-293 (EETA…GRML). A phosphoserine mark is found at Ser34, Ser35, and Ser89. 2 stretches are compositionally biased toward basic and acidic residues: residues 73-95 (SSRD…RDKT) and 277-293 (GQER…GRML).

This is an uncharacterized protein from Mus musculus (Mouse).